A 352-amino-acid chain; its full sequence is tRNA-specific 2-thiouridylase MnmA (352 aa).

6–13 (AVSGGTDS) is a binding site for ATP. The Nucleophile role is filled by C92. C92 and C189 are oxidised to a cystine. G116 is an ATP binding site. The interaction with tRNA stretch occupies residues 139 to 141 (KDQ). C189 serves as the catalytic Cysteine persulfide intermediate. Residues 294-295 (RY) are interaction with tRNA.

This sequence belongs to the MnmA/TRMU family.

It localises to the cytoplasm. The enzyme catalyses S-sulfanyl-L-cysteinyl-[protein] + uridine(34) in tRNA + AH2 + ATP = 2-thiouridine(34) in tRNA + L-cysteinyl-[protein] + A + AMP + diphosphate + H(+). Its function is as follows. Catalyzes the 2-thiolation of uridine at the wobble position (U34) of tRNA, leading to the formation of s(2)U34. The polypeptide is tRNA-specific 2-thiouridylase MnmA (Lawsonia intracellularis (strain PHE/MN1-00)).